Reading from the N-terminus, the 444-residue chain is N-succinylarginine dihydrolase (444 aa).

Substrate-binding positions include 19–28 (AGLSFGNVAS), asparagine 110, and 137–138 (HR). Glutamate 174 is an active-site residue. Arginine 214 is a substrate binding site. Histidine 250 is an active-site residue. Substrate contacts are provided by aspartate 252 and asparagine 362. Cysteine 368 serves as the catalytic Nucleophile.

It belongs to the succinylarginine dihydrolase family. Homodimer.

The catalysed reaction is N(2)-succinyl-L-arginine + 2 H2O + 2 H(+) = N(2)-succinyl-L-ornithine + 2 NH4(+) + CO2. Its pathway is amino-acid degradation; L-arginine degradation via AST pathway; L-glutamate and succinate from L-arginine: step 2/5. Functionally, catalyzes the hydrolysis of N(2)-succinylarginine into N(2)-succinylornithine, ammonia and CO(2). The sequence is that of N-succinylarginine dihydrolase from Shewanella baltica (strain OS185).